The primary structure comprises 180 residues: Small ribosomal subunit protein eS10y (180 aa).

Residues 92 to 180 (LKKQQKPLGR…GGGAAGSDLP (89 aa)) form a disordered region. Basic and acidic residues predominate over residues 108 to 128 (DRPRGPPRGDGERRFGDRDGY). Residues 152–180 (FRGGAGGARQGFGRGAGGFGGGAAGSDLP) are compositionally biased toward gly residues.

Belongs to the eukaryotic ribosomal protein eS10 family.

Its subcellular location is the cytoplasm. The protein is Small ribosomal subunit protein eS10y (RPS10B) of Arabidopsis thaliana (Mouse-ear cress).